A 128-amino-acid polypeptide reads, in one-letter code: Large ribosomal subunit protein uL22 (128 aa).

This sequence belongs to the universal ribosomal protein uL22 family. As to quaternary structure, part of the 50S ribosomal subunit.

This protein binds specifically to 23S rRNA; its binding is stimulated by other ribosomal proteins, e.g. L4, L17, and L20. It is important during the early stages of 50S assembly. It makes multiple contacts with different domains of the 23S rRNA in the assembled 50S subunit and ribosome. In terms of biological role, the globular domain of the protein is located near the polypeptide exit tunnel on the outside of the subunit, while an extended beta-hairpin is found that lines the wall of the exit tunnel in the center of the 70S ribosome. The polypeptide is Large ribosomal subunit protein uL22 (Prochlorococcus marinus (strain MIT 9312)).